The chain runs to 388 residues: Dual-specificity RNA methyltransferase RlmN (388 aa).

Residue glutamate 109 is the Proton acceptor of the active site. Residues 115–354 (EDDRATLCVS…TIVRKTRGDD (240 aa)) form the Radical SAM core domain. A disulfide bridge connects residues cysteine 122 and cysteine 359. Positions 129, 133, and 136 each coordinate [4Fe-4S] cluster. S-adenosyl-L-methionine is bound by residues 183–184 (GE), serine 215, 237–239 (SLH), and asparagine 316. Cysteine 359 acts as the S-methylcysteine intermediate in catalysis.

The protein belongs to the radical SAM superfamily. RlmN family. [4Fe-4S] cluster is required as a cofactor.

It is found in the cytoplasm. The enzyme catalyses adenosine(2503) in 23S rRNA + 2 reduced [2Fe-2S]-[ferredoxin] + 2 S-adenosyl-L-methionine = 2-methyladenosine(2503) in 23S rRNA + 5'-deoxyadenosine + L-methionine + 2 oxidized [2Fe-2S]-[ferredoxin] + S-adenosyl-L-homocysteine. It catalyses the reaction adenosine(37) in tRNA + 2 reduced [2Fe-2S]-[ferredoxin] + 2 S-adenosyl-L-methionine = 2-methyladenosine(37) in tRNA + 5'-deoxyadenosine + L-methionine + 2 oxidized [2Fe-2S]-[ferredoxin] + S-adenosyl-L-homocysteine. Functionally, specifically methylates position 2 of adenine 2503 in 23S rRNA and position 2 of adenine 37 in tRNAs. m2A2503 modification seems to play a crucial role in the proofreading step occurring at the peptidyl transferase center and thus would serve to optimize ribosomal fidelity. The polypeptide is Dual-specificity RNA methyltransferase RlmN (Salmonella typhi).